Reading from the N-terminus, the 274-residue chain is Bis(5'-nucleosyl)-tetraphosphatase, symmetrical (274 aa).

Belongs to the Ap4A hydrolase family.

The enzyme catalyses P(1),P(4)-bis(5'-adenosyl) tetraphosphate + H2O = 2 ADP + 2 H(+). Hydrolyzes diadenosine 5',5'''-P1,P4-tetraphosphate to yield ADP. The polypeptide is Bis(5'-nucleosyl)-tetraphosphatase, symmetrical (Shewanella baltica (strain OS195)).